The primary structure comprises 387 residues: Oleoyl-12-hydroxylase FAH12 (387 aa).

Residues 1–34 are disordered; sequence MGGGGRMSTVITSNNSEKKGGSSHLKRAPHTKPP. 2 consecutive transmembrane segments (helical) span residues 61–81 and 88–108; these read AYDVCLSFLFYSIATNFFPYI and VAWLVYWLFQGCILTGLWVIG. The Histidine box-1 motif lies at 109-113; sequence HECGH. A helical transmembrane segment spans residues 121-141; sequence LADDIVGLIVHSALLVPYFSW. Residues 145–149 carry the Histidine box-2 motif; that stretch reads HRRHH. Transmembrane regions (helical) follow at residues 183 to 203, 229 to 249, and 253 to 273; these read VLTLAATLLLGWPLYLAFNVS, IYIADLGIFATTFVLYQATMA, and AWVMRIYGVPLLIVNCFLVMI. The Histidine box-3 motif lies at 319–323; it reads HVAHH.

Belongs to the fatty acid desaturase type 1 family. As to expression, expressed in seeds. Barely detected in leaves.

The protein localises to the microsome membrane. The catalysed reaction is a 1-acyl-2-(9Z)-octadecenoyl-sn-glycero-3-phosphocholine + 2 Fe(II)-[cytochrome b5] + O2 + 2 H(+) = a 1-acyl-2-[(R)-12-hydroxyoleoyl]-sn-glycero-3-phosphocholine + 2 Fe(III)-[cytochrome b5] + H2O. It participates in lipid metabolism; monounsaturated fatty acid biosynthesis. Its activity is regulated as follows. Inhibited by oleoyloxyethyl phosphocholine. Oleoyl-12-hydroxylase involved in the biosynthesis of ricinoleate (12-hydroxy-cis-9-octadecenoate), the major fatty acid constituent of the oil seeds from castor bean plants. Catalyzes the hydroxylation at the 12-position of 1-acyl-2-oleoyl-sn-glycero-3-phosphocholine (2-oleoyl-PC), which seems to be the actual physiological subtrate. It uses cytochrome b5 as an electron donor. May also be involved in the production of lesquerolic acid (14-hydroxyeicos-cis-ll-enoic acid) in vitro. The chain is Oleoyl-12-hydroxylase FAH12 from Ricinus communis (Castor bean).